The chain runs to 91 residues: Elongation factor 1-beta (91 aa).

Belongs to the EF-1-beta/EF-1-delta family.

Its function is as follows. Promotes the exchange of GDP for GTP in EF-1-alpha/GDP, thus allowing the regeneration of EF-1-alpha/GTP that could then be used to form the ternary complex EF-1-alpha/GTP/AAtRNA. This is Elongation factor 1-beta (ef1b) from Pyrococcus abyssi (strain GE5 / Orsay).